Here is a 131-residue protein sequence, read N- to C-terminus: Profilin-3 (131 aa).

It belongs to the profilin family. In terms of assembly, occurs in many kinds of cells as a complex with monomeric actin in a 1:1 ratio.

The protein resides in the cytoplasm. Its subcellular location is the cytoskeleton. In terms of biological role, binds to actin and affects the structure of the cytoskeleton. At high concentrations, profilin prevents the polymerization of actin, whereas it enhances it at low concentrations. By binding to PIP2, it inhibits the formation of IP3 and DG. The chain is Profilin-3 (PRO3) from Triticum aestivum (Wheat).